Reading from the N-terminus, the 2227-residue chain is Genome polyprotein (2227 aa).

Short sequence motifs ((L)YPX(n)L motif) lie at residues tyrosine 167 to leucine 171 and tyrosine 200 to leucine 205. Residues methionine 766–glutamine 836 form an involved in P1-2A pentamerization region. A helical membrane pass occupies residues valine 1010–valine 1030. The segment at isoleucine 1043 to glutamate 1070 is membrane-penetrating ability. Positions lysine 1127–phenylalanine 1152 form a coiled coil. Positions histidine 1204 to methionine 1366 constitute an SF3 helicase domain. Glycine 1230–serine 1237 contributes to the ATP binding site. The helical transmembrane segment at tryptophan 1462–tyrosine 1482 threads the bilayer. An O-(5'-phospho-RNA)-tyrosine modification is found at tyrosine 1499. A Peptidase C3 domain is found at aspartate 1514–phenylalanine 1728. Active-site for protease 3C activity residues include histidine 1563, aspartate 1603, and cysteine 1691. Positions aspartate 1976 to asparagine 2097 constitute a RdRp catalytic domain.

The protein belongs to the picornaviridae polyprotein family. In terms of assembly, homodimer. Homomultimer; probably interacts with membranes in a multimeric form. Seems to assemble into amyloid-like fibers. As to quaternary structure, homodimer. Monomer. Interacts with protein 3CD. Interacts with host ACBD3. In terms of assembly, interacts with protein 3AB. As to quaternary structure, interacts with human MAVS. Homodimer; disulfide-linked. In terms of assembly, homopentamer. Homooligomer. As to quaternary structure, interacts with capsid protein VP2. Interacts with capsid protein VP3. Interacts with capsid protein VP1. Interacts with capsid protein VP3. In terms of assembly, interacts with capsid protein VP1. Interacts with capsid protein VP2. Specific enzymatic cleavages by viral protease in vivo yield a variety of precursors and mature proteins. Polyprotein processing intermediates are produced, such as P1-2A which is a functional precursor of the structural proteins, VP0 which is a VP4-VP2 precursor, VP1-2A precursor, 3ABC precursor which is a stable and catalytically active precursor of 3A, 3B and 3C proteins, 3AB and 3CD precursors. The assembly signal 2A is removed from VP1-2A by a host protease, possibly host Cathepsin L. This cleavage occurs over a region of 3 amino-acids probably generating VP1 proteins with heterogeneous C-termini. In terms of processing, during virion maturation, immature virions are rendered infectious following cleavage of VP0 into VP4 and VP2. This maturation seems to be an autocatalytic event triggered by the presence of RNA in the capsid and is followed by a conformational change of the particle. Post-translationally, the assembly signal 2A is removed from VP1-2A by a host protease, possibly host Cathepsin L in naked virions. This cleavage does not occur in enveloped virions. This cleavage occurs over a region of 3 amino-acids probably generating VP1 proteins with heterogeneous C-termini. VPg is uridylylated prior to priming replication into VPg-pUpU. In terms of processing, unlike other picornaviruses, does not seem to be myristoylated.

It localises to the virion. Its subcellular location is the host endosome. It is found in the host multivesicular body. The protein localises to the host membrane. The protein resides in the host mitochondrion outer membrane. It localises to the host cytoplasm. Its subcellular location is the host cytoplasmic vesicle membrane. It catalyses the reaction RNA(n) + a ribonucleoside 5'-triphosphate = RNA(n+1) + diphosphate. The catalysed reaction is a ribonucleoside 5'-triphosphate + H2O = a ribonucleoside 5'-diphosphate + phosphate + H(+). The enzyme catalyses Selective cleavage of Gln-|-Gly bond in the poliovirus polyprotein. In other picornavirus reactions Glu may be substituted for Gln, and Ser or Thr for Gly.. Functionally, capsid proteins VP1, VP2, and VP3 form a closed capsid enclosing the viral positive strand RNA genome. All these proteins contain a beta-sheet structure called beta-barrel jelly roll. Together they form an icosahedral capsid (T=3) composed of 60 copies of each VP1, VP2, and VP3, with a diameter of approximately 300 Angstroms. VP1 is situated at the 12 fivefold axes, whereas VP2 and VP3 are located at the quasi-sixfold axes. The naked capsid interacts with the host receptor HAVCR1 to provide virion attachment to and probably entry into the target cell. VP0 precursor is a component of the immature procapsids. Its function is as follows. Plays a role in the assembly of the 12 pentamers into an icosahedral structure. Has not been detected in mature virions, supposedly owing to its small size. In terms of biological role, precursor component of immature procapsids that corresponds to an extended form of the structural protein VP1. After maturation, possibly by the host Cathepsin L, the assembly signal 2A is cleaved to give rise to the mature VP1 protein. Functionally, functions as a viroporin. Affects membrane integrity and causes an increase in membrane permeability. Involved in host intracellular membrane rearrangements probably to give rise to the viral factories. Does not disrupt calcium homeostasis or glycoprotein trafficking. Antagonizes the innate immune response of the host by suppressing IFN-beta synthesis, which it achieves by interfering with the RIG-I/IFIH1 pathway. Affects membrane integrity and causes an increase in membrane permeability. Its function is as follows. Associates with and induces structural rearrangements of intracellular membranes. Displays RNA-binding activity. In terms of biological role, the precursor 3ABC is targeted to the mitochondrial membrane where protease 3C activity cleaves and inhibits the host antiviral protein MAVS, thereby disrupting activation of IRF3 through the IFIH1/MDA5 pathway. In vivo, the protease activity of 3ABC precursor is more efficient in cleaving the 2BC precursor than that of protein 3C. The 3ABC precursor may therefore play a role in the proteolytic processing of the polyprotein. Possible viroporin. Functionally, interacts with the 3CD precursor and with RNA structures found at both the 5'- and 3'-termini of the viral genome. Since the 3AB precursor contains the hydrophobic domain 3A, it probably anchors the whole viral replicase complex to intracellular membranes on which viral RNA synthesis occurs. May serve as membrane anchor to the 3AB and 3ABC precursors via its hydrophobic domain. May interact with RNA. Its function is as follows. Acts as a primer for viral RNA replication and remains covalently bound to viral genomic RNA. VPg is uridylylated prior to priming replication into VPg-pUpU. The VPg-pUpU is then used as primer on the genomic RNA poly(A) by the RNA-dependent RNA polymerase to replicate the viral genome. In terms of biological role, cysteine protease that generates mature viral proteins from the precursor polyprotein. In addition to its proteolytic activity, it binds to viral RNA, and thus influences viral genome replication. RNA and substrate bind cooperatively to the protease. Cleaves IKBKG/NEMO to impair innate immune signaling. Cleaves host PABPC1 which may participate in the switch of viral translation to RNA synthesis. Functionally, interacts with the 3AB precursor and with RNA structures found at both the 5'- and 3'-termini of the viral genome. Disrupts TLR3 signaling by degrading the host adapter protein TICAM1/TRIF. Replicates genomic and antigenomic RNA by recognizing replications specific signals. This chain is Genome polyprotein, found in Cercopithecus hamlyni (Owl-faced monkey).